The primary structure comprises 332 residues: Homeobox protein DLX-2 (332 aa).

Over residues 19 to 28 (ASSTYHQHQQ) the composition is skewed to polar residues. A disordered region spans residues 19–83 (ASSTYHQHQQ…QHPAGGGGGG (65 aa)). The segment covering 40 to 49 (NSNSSSSNSS) has biased composition (low complexity). A compositionally biased stretch (polar residues) spans 55 to 75 (ESPTLPVSTATDSSYYTNQQH). Residues 155–214 (VRKPRTIYSSFQLAALQRRFQKTQYLALPERAELAASLGLTQTQVKIWFQNRRSKFKKMW) constitute a DNA-binding region (homeobox). Disordered regions lie at residues 219–272 (IPTE…SSPS) and 304–332 (PSQT…GTIF). S235 carries the phosphoserine modification. A compositionally biased stretch (gly residues) spans 253–266 (AGGGPGSGGGGAGS). Basic residues predominate over residues 310–320 (AHHHHHHHHHA).

This sequence belongs to the distal-less homeobox family. Interacts (via homeobox DNA-binding domain) with POU4F2; this interaction enhances retinal ganglion cell (RGC) differentiation. Phosphorylated by serine/threonine kinases. Expressed only in neural and other ectodermal structures of the head: the brain, the vomeronasal organ, and the preameloblasts of the teeth. Primarily expressed in the germinal cells of the ventral forebrain in the midgestational embryo, and in both dorsal and ventral ventricular zones in late embryogenesis and early postnatal life. Expressed in the inner nuclear layer of the retina.

The protein localises to the nucleus. In terms of biological role, acts as a transcriptional activator. Activates transcription of CGA/alpha-GSU, via binding to the downstream activin regulatory element (DARE) in the gene promoter. Plays a role in terminal differentiation of interneurons, such as amacrine and bipolar cells in the developing retina. Likely to play a regulatory role in the development of the ventral forebrain. May play a role in craniofacial patterning and morphogenesis. The sequence is that of Homeobox protein DLX-2 (Dlx2) from Mus musculus (Mouse).